The sequence spans 1396 residues: ATP-binding cassette transporter pdr1 (1396 aa).

A disordered region spans residues 1 to 22 (MSEQEKGKGDLDDPNSKNTKCP). One can recognise an ABC transporter 1 domain in the interval 73–320 (LHPINIIFRT…FLDLGFIPAK (248 aa)). Residues 412–622 (LQVFATAKVT…GYESIMLNEF (211 aa)) enclose the ABC transmembrane type-2 1 domain. 6 consecutive transmembrane segments (helical) span residues 431–451 (YIATFVFTYVFQALMLGSLFY), 466–486 (VLSNAIVFTAIQTMSEVDIIF), 512–532 (LVEFPMRIVVVTMYDIIVYFL), 543–563 (FIFYLFTIVITFCMSAVFRFI), 572–592 (IAALIGGIGALVLIIFCGAVM), and 680–700 (GIILGFAIFILASSLILANFI). The 244-residue stretch at 758–1001 (LCWRDLNFTV…LVNYFKRIHG (244 aa)) folds into the ABC transporter 2 domain. 794–801 (GENKSGKS) lines the ATP pocket. The region spanning 1071 to 1286 (FQIYKISMRN…FLEGMIGGVL (216 aa)) is the ABC transmembrane type-2 2 domain. Transmembrane regions (helical) follow at residues 1095–1115 (VAFNIVAGLIIGFSFYKQGVG), 1166–1186 (FIIAFFLVEAVINCCFATLFF), 1208–1228 (FAWLMLMIFTLYYTTLGIGIA), 1245–1265 (FVFIQYFNGMIQLPGVIVGFW), and 1361–1381 (CIMIGYTAFNLGAAIALYYII).

The protein belongs to the ABC transporter superfamily. ABCG family. PDR (TC 3.A.1.205) subfamily.

Its subcellular location is the endoplasmic reticulum membrane. This Schizosaccharomyces pombe (strain 972 / ATCC 24843) (Fission yeast) protein is ATP-binding cassette transporter pdr1 (pdr1).